We begin with the raw amino-acid sequence, 327 residues long: Cytochrome c oxidase subunit 2 (327 aa).

The N-terminal stretch at 1 to 23 is a signal peptide; it reads MEQIPASIWTLTAGVVVTLISFW. 2 helical membrane passes run 56 to 78 and 96 to 114; these read LFLV…AGEE and AIPA…DIFQ. Residues H221, C255, C259, and H263 each contribute to the Cu cation site.

Belongs to the cytochrome c oxidase subunit 2 family. Cu cation is required as a cofactor.

The protein resides in the cell membrane. It carries out the reaction 4 Fe(II)-[cytochrome c] + O2 + 8 H(+)(in) = 4 Fe(III)-[cytochrome c] + 2 H2O + 4 H(+)(out). Subunits I and II form the functional core of the enzyme complex. Electrons originating in cytochrome c are transferred via heme a and Cu(A) to the binuclear center formed by heme a3 and Cu(B). The chain is Cytochrome c oxidase subunit 2 (ctaC) from Thermostichus vulcanus (Synechococcus vulcanus).